Reading from the N-terminus, the 466-residue chain is Ribosomal protein uS12 methylthiotransferase RimO (466 aa).

The region spanning 16–127 (PKVAFAHLGC…IVDVLQRVEA (112 aa)) is the MTTase N-terminal domain. 6 residues coordinate [4Fe-4S] cluster: cysteine 25, cysteine 61, cysteine 90, cysteine 165, cysteine 169, and cysteine 172. A Radical SAM core domain is found at 151–380 (TTDQAVAYLK…MALQQPIAAE (230 aa)). The region spanning 383–454 (QRWVGKTVDV…IYDLTGHIVG (72 aa)) is the TRAM domain.

This sequence belongs to the methylthiotransferase family. RimO subfamily. [4Fe-4S] cluster serves as cofactor.

It localises to the cytoplasm. It carries out the reaction L-aspartate(89)-[ribosomal protein uS12]-hydrogen + (sulfur carrier)-SH + AH2 + 2 S-adenosyl-L-methionine = 3-methylsulfanyl-L-aspartate(89)-[ribosomal protein uS12]-hydrogen + (sulfur carrier)-H + 5'-deoxyadenosine + L-methionine + A + S-adenosyl-L-homocysteine + 2 H(+). Its function is as follows. Catalyzes the methylthiolation of an aspartic acid residue of ribosomal protein uS12. The protein is Ribosomal protein uS12 methylthiotransferase RimO of Synechococcus sp. (strain CC9902).